The following is a 467-amino-acid chain: ATP synthase subunit beta (467 aa).

150–157 serves as a coordination point for ATP; sequence GGAGVGKT.

Belongs to the ATPase alpha/beta chains family. F-type ATPases have 2 components, CF(1) - the catalytic core - and CF(0) - the membrane proton channel. CF(1) has five subunits: alpha(3), beta(3), gamma(1), delta(1), epsilon(1). CF(0) has three main subunits: a(1), b(2) and c(9-12). The alpha and beta chains form an alternating ring which encloses part of the gamma chain. CF(1) is attached to CF(0) by a central stalk formed by the gamma and epsilon chains, while a peripheral stalk is formed by the delta and b chains.

The protein resides in the cell inner membrane. The catalysed reaction is ATP + H2O + 4 H(+)(in) = ADP + phosphate + 5 H(+)(out). Produces ATP from ADP in the presence of a proton gradient across the membrane. The catalytic sites are hosted primarily by the beta subunits. The chain is ATP synthase subunit beta from Vibrio alginolyticus.